The sequence spans 157 residues: Dihydrofolate reductase type 6 (157 aa).

One can recognise a DHFR domain in the interval K2–K156.

Belongs to the dihydrofolate reductase family. Homodimer.

It catalyses the reaction (6S)-5,6,7,8-tetrahydrofolate + NADP(+) = 7,8-dihydrofolate + NADPH + H(+). It participates in cofactor biosynthesis; tetrahydrofolate biosynthesis; 5,6,7,8-tetrahydrofolate from 7,8-dihydrofolate: step 1/1. Its function is as follows. Key enzyme in folate metabolism. Catalyzes an essential reaction for de novo glycine and purine synthesis, and for DNA precursor synthesis. The sequence is that of Dihydrofolate reductase type 6 (dhfrVI) from Proteus mirabilis.